The sequence spans 206 residues: Large ribosomal subunit protein uL4 (206 aa).

Positions 46-77 (GTRAQKDREQVRHSTKKPFKQKGTGRARAGMT) are disordered. The span at 58 to 70 (HSTKKPFKQKGTG) shows a compositional bias: basic residues.

This sequence belongs to the universal ribosomal protein uL4 family. Part of the 50S ribosomal subunit.

One of the primary rRNA binding proteins, this protein initially binds near the 5'-end of the 23S rRNA. It is important during the early stages of 50S assembly. It makes multiple contacts with different domains of the 23S rRNA in the assembled 50S subunit and ribosome. Functionally, forms part of the polypeptide exit tunnel. The chain is Large ribosomal subunit protein uL4 from Polaromonas sp. (strain JS666 / ATCC BAA-500).